Consider the following 454-residue polypeptide: tRNA modification GTPase MnmE (454 aa).

Residues R23, E80, and K120 each contribute to the (6S)-5-formyl-5,6,7,8-tetrahydrofolate site. Positions 216 to 377 (GMKVVIAGRP…LRDHLKSSMG (162 aa)) constitute a TrmE-type G domain. A K(+)-binding site is contributed by N226. Residues 226-231 (NAGKSS), 245-251 (TDIAGTT), 270-273 (DTAG), 335-338 (NKAD), and 358-360 (SAR) contribute to the GTP site. Residue S230 participates in Mg(2+) binding. Positions 245, 247, and 250 each coordinate K(+). T251 is a Mg(2+) binding site. K454 is a binding site for (6S)-5-formyl-5,6,7,8-tetrahydrofolate.

Belongs to the TRAFAC class TrmE-Era-EngA-EngB-Septin-like GTPase superfamily. TrmE GTPase family. In terms of assembly, homodimer. Heterotetramer of two MnmE and two MnmG subunits. The cofactor is K(+).

It localises to the cytoplasm. Its function is as follows. Exhibits a very high intrinsic GTPase hydrolysis rate. Involved in the addition of a carboxymethylaminomethyl (cmnm) group at the wobble position (U34) of certain tRNAs, forming tRNA-cmnm(5)s(2)U34. The sequence is that of tRNA modification GTPase MnmE from Erwinia tasmaniensis (strain DSM 17950 / CFBP 7177 / CIP 109463 / NCPPB 4357 / Et1/99).